The sequence spans 146 residues: 3-hydroxyacyl-[acyl-carrier-protein] dehydratase FabZ (146 aa).

H49 is a catalytic residue.

It belongs to the thioester dehydratase family. FabZ subfamily.

It is found in the cytoplasm. It catalyses the reaction a (3R)-hydroxyacyl-[ACP] = a (2E)-enoyl-[ACP] + H2O. Involved in unsaturated fatty acids biosynthesis. Catalyzes the dehydration of short chain beta-hydroxyacyl-ACPs and long chain saturated and unsaturated beta-hydroxyacyl-ACPs. This chain is 3-hydroxyacyl-[acyl-carrier-protein] dehydratase FabZ, found in Azotobacter vinelandii (strain DJ / ATCC BAA-1303).